We begin with the raw amino-acid sequence, 137 residues long: UPF0768 protein C1952.04c (137 aa).

Residues 79-93 (QRRRREDLPTPERPE) show a composition bias toward basic and acidic residues. The interval 79-137 (QRRRREDLPTPERPEASAQQHAFFPGSSSQQTDIPNVRPQPHIPPPRKSDEAPPPYSYK) is disordered. The span at 119–137 (PHIPPPRKSDEAPPPYSYK) shows a compositional bias: pro residues.

Belongs to the UPF0768 family.

The chain is UPF0768 protein C1952.04c from Schizosaccharomyces pombe (strain 972 / ATCC 24843) (Fission yeast).